The primary structure comprises 303 residues: Pantothenate synthetase (303 aa).

The tract at residues 1 to 21 (MIATGHGGAERRTTAGDGTAR) is disordered. An ATP-binding site is contributed by 48 to 55 (MGALHDGH). The active-site Proton donor is the H55. Q79 contributes to the (R)-pantoate binding site. Q79 is a beta-alanine binding site. Position 165 to 168 (165 to 168 (GRKD)) interacts with ATP. Q171 is a binding site for (R)-pantoate. 202-205 (ASSR) contributes to the ATP binding site.

Belongs to the pantothenate synthetase family. As to quaternary structure, homodimer.

It is found in the cytoplasm. It carries out the reaction (R)-pantoate + beta-alanine + ATP = (R)-pantothenate + AMP + diphosphate + H(+). Its pathway is cofactor biosynthesis; (R)-pantothenate biosynthesis; (R)-pantothenate from (R)-pantoate and beta-alanine: step 1/1. Catalyzes the condensation of pantoate with beta-alanine in an ATP-dependent reaction via a pantoyl-adenylate intermediate. The sequence is that of Pantothenate synthetase from Acidothermus cellulolyticus (strain ATCC 43068 / DSM 8971 / 11B).